We begin with the raw amino-acid sequence, 614 residues long: Vitamin B12 transporter BtuB (614 aa).

Positions 1–20 (MIKKASLLTACSVTAFSAWA) are cleaved as a signal peptide. The TonB box motif lies at 26–33 (DTLVVTAN). Residues 38–152 (PRSTVLAPTT…IGGVVNIITT (115 aa)) enclose the TBDR plug domain. Residues Leu-83, Ser-85, Asn-92, and 110-111 (VS) each bind cyanocob(III)alamin. In terms of domain architecture, TBDR beta-barrel spans 155 to 614 (EPGTEISAGW…EYTLSGSYTF (460 aa)). A run of 3 beta stranded transmembrane segments spans residues 158–165 (TEISAGWG), 169–178 (YQNYDVSTQQ), and 184–195 (TRVTLLGDYAHT). Positions 199, 211, 213, and 215 each coordinate Ca(2+). Transmembrane regions (beta stranded) follow at residues 217–227 (FLSKTLYGALE) and 232–248 (DAWS…NRTN). Ca(2+)-binding residues include Tyr-249 and Asp-250. A cyanocob(III)alamin-binding site is contributed by Ala-251. Asp-261 is a binding site for Ca(2+). 14 beta stranded membrane-spanning segments follow: residues 263–277 (RKLY…LRYN), 279–296 (ELIK…KDYN), 309–325 (TLDE…NNVI), 328–337 (HGSIGAGVDW), 353–369 (YDQR…QQVG), 371–381 (FTFEGAARNDD), 385–400 (FGRH…WEFI), 403–417 (YRFI…KAPN), 434–443 (KSKQWEGAFE), 449–458 (VNWRISGYRN), 473–490 (YYNE…TANF), 494–509 (PLTH…ARNA), 517–529 (RRAK…QLDW), and 535–550 (DWGI…YDKD). A cyanocob(III)alamin-binding site is contributed by Thr-309. Residue Arg-517 coordinates cyanocob(III)alamin. Tyr-551 provides a ligand contact to cyanocob(III)alamin. 3 consecutive transmembrane segments (beta stranded) span residues 558–572 (TVKM…LAVA), 585–596 (IANLFDKDYETV), and 602–614 (AGRE…SYTF). Positions 597–614 (YGYQTAGREYTLSGSYTF) match the TonB C-terminal box motif.

The protein belongs to the TonB-dependent receptor family. BtuB (TC 1.B.14.3.1) subfamily.

It is found in the cell outer membrane. In terms of biological role, involved in the active translocation of vitamin B12 (cyanocobalamin) across the outer membrane to the periplasmic space. It derives its energy for transport by interacting with the trans-periplasmic membrane protein TonB. This Escherichia coli O139:H28 (strain E24377A / ETEC) protein is Vitamin B12 transporter BtuB.